A 356-amino-acid chain; its full sequence is DNA polymerase IV (356 aa).

Residues 1–188 enclose the UmuC domain; it reads MDTSRKIIHI…IPVTKFYGVG (188 aa). Residues Asp-11 and Asp-106 each contribute to the Mg(2+) site. The active site involves Glu-107.

It belongs to the DNA polymerase type-Y family. Monomer. Mg(2+) serves as cofactor.

It is found in the cytoplasm. It catalyses the reaction DNA(n) + a 2'-deoxyribonucleoside 5'-triphosphate = DNA(n+1) + diphosphate. Functionally, poorly processive, error-prone DNA polymerase involved in untargeted mutagenesis. Copies undamaged DNA at stalled replication forks, which arise in vivo from mismatched or misaligned primer ends. These misaligned primers can be extended by PolIV. Exhibits no 3'-5' exonuclease (proofreading) activity. May be involved in translesional synthesis, in conjunction with the beta clamp from PolIII. This is DNA polymerase IV from Listeria innocua serovar 6a (strain ATCC BAA-680 / CLIP 11262).